Consider the following 71-residue polypeptide: Brevinin-1HN1 (71 aa).

The first 22 residues, 1-22 (MFTSKKPLLLLFFLGTINLSLC), serve as a signal peptide directing secretion. Residues 23 to 45 (EQERDADEEERRDDPDERDVEVE) constitute a propeptide that is removed on maturation. A disulfide bridge connects residues Cys-65 and Cys-71.

In terms of tissue distribution, expressed by the skin glands.

The protein resides in the secreted. Its function is as follows. Has antimicrobial activity against Gram-positive bacteria and fungi but has weak or no activity against a range of Gram-negative bacteria except P.faecalis. Active against the Gram-positive bacteria E.faecium 091299 (MIC=19 uM), E.faecalis 981 (MIC=19 uM), S.aureus ATCC 25923 (MIC=1.2 uM), S.carnosus KHS (MIC=4.8 uM), B.licheniformis X39 (MIC=2.4 uM) and R.rhodochrous X15 (MIC=1.2 uM). Active against the Gram-negative bacterium P.faecalis X29 (MIC=4.8 uM), is virtually inactive against E.coli ATCC 25922 (MIC=150 uM) and inactive against P.aeruginosa and S.typhi. Has antifungal activity against C.albicans ATCC 2002 (MIC=2.4 uM) and is also active against the slime mold 090223 (MIC=1.2 uM). Has low hemolytic activity against human erythrocytes (LC(50)=75 uM). This chain is Brevinin-1HN1, found in Odorrana hainanensis (Odor frog).